A 1841-amino-acid polypeptide reads, in one-letter code: Cell division control protein 12 (1841 aa).

Composition is skewed to polar residues over residues 1–25 and 46–63; these read MRNSSKGQDPNFSYDSILSTPTPSA and SIESVSTLIQPNKSQSVT. 3 disordered regions span residues 1 to 63, 78 to 134, and 152 to 181; these read MRNS…QSVT, NSHN…GPRL, and PPVHSRSFDPLPKPPVPSVPVSKTKRRTKH. Residues 232-620 enclose the GBD/FH3 domain; that stretch reads TRPPSLDQLI…RILLNSKVSN (389 aa). Positions 674 to 715 form a coiled coil; sequence LGAEDLIAKLNKEVEDQKDVILSQKRTNETLKTEIDALQKSH. Residues 740–972 form the FH1 domain; sequence GSTNSKERII…VSPAVSNNIS (233 aa). The 412-residue stretch at 980–1391 folds into the FH2 domain; sequence TGLTRRPTRR…QHRRLNLVNN (412 aa). The stretch at 1260–1290 forms a coiled coil; it reads TEAAKLNIEAIEQECSELIRGCQNLQIDCDS. 3 disordered regions span residues 1445 to 1661, 1696 to 1715, and 1735 to 1758; these read EAPN…ENNL, TTTTISTARAKPGNNDINTI, and KSNKFSGTNDLNFQQATKPDGSNK. 2 stretches are compositionally biased toward polar residues: residues 1447–1456 and 1483–1497; these read PNTSTKSSPA and SESTDGLSDALNITP. Positions 1499-1516 are enriched in basic and acidic residues; it reads KKGEVSSKAKKGYNYEKR. The segment covering 1539–1553 has biased composition (polar residues); sequence GRSASYTFSDPSSLE. Residue Ser1541 is modified to Phosphoserine. Residue Tyr1544 is modified to Phosphotyrosine. Over residues 1554-1567 the composition is skewed to basic and acidic residues; the sequence is DSNRQKPFNGEKFR. Over residues 1568 to 1577 the composition is skewed to basic residues; sequence RFSSKSRRGS. Residues 1594–1604 are compositionally biased toward polar residues; that stretch reads INNNQTSPQNK. A compositionally biased stretch (basic and acidic residues) spans 1605–1621; it reads PSKESLKSDTISNEKKV. Residues 1630–1641 are compositionally biased toward polar residues; that stretch reads NLLTPTISNGTR.

This sequence belongs to the formin homology family. BNI1 subfamily. In terms of assembly, interacts with profilin and actin at the FH1 and FH2 domains respectively.

The protein localises to the nucleus. In terms of biological role, plays a role in the cell cycle. Involved in cytokinesis. Component of the cell division ring. In the absence of profilin, caps the barbed end of actin filaments, thus preventing subunit addition and dissociation. In the presence of profilin, nucleates actin filaments that grow rapidly from their barbed ends. The protein is Cell division control protein 12 (cdc12) of Schizosaccharomyces pombe (strain 972 / ATCC 24843) (Fission yeast).